The following is a 221-amino-acid chain: N-(5'-phosphoribosyl)anthranilate isomerase (221 aa).

The protein belongs to the TrpF family.

The catalysed reaction is N-(5-phospho-beta-D-ribosyl)anthranilate = 1-(2-carboxyphenylamino)-1-deoxy-D-ribulose 5-phosphate. It functions in the pathway amino-acid biosynthesis; L-tryptophan biosynthesis; L-tryptophan from chorismate: step 3/5. This chain is N-(5'-phosphoribosyl)anthranilate isomerase, found in Parabacteroides distasonis (strain ATCC 8503 / DSM 20701 / CIP 104284 / JCM 5825 / NCTC 11152).